Reading from the N-terminus, the 80-residue chain is Serine palmitoyltransferase small subunit B (80 aa).

Residues Met-1–Ser-11 lie on the Cytoplasmic side of the membrane. The chain crosses the membrane as a helical span at residues Trp-12–Trp-29. Residues Glu-30–Thr-36 are Lumenal-facing. Residues Leu-37 to Val-57 traverse the membrane as a helical segment. The Cytoplasmic segment spans residues Arg-58 to Ser-80.

It belongs to the SPTSS family. SPTSSB subfamily. In terms of assembly, component of the serine palmitoyltransferase (SPT) complex, which is composed of SPTLC1, SPTLC2 or SPTLC3 and SPTSSA or SPTSSB. The heterodimer consisting of SPTLC1 and SPTLC2/SPTLC3 forms the catalytic core of the enzyme, while SPTSSA or SPTSSB subunits determine substrate specificity. SPT also interacts with ORMDL proteins, especially ORMDL3, which negatively regulate SPT activity in the presence of ceramides.

The protein localises to the endoplasmic reticulum membrane. It functions in the pathway lipid metabolism; sphingolipid metabolism. Its function is as follows. Component of the serine palmitoyltransferase multisubunit enzyme (SPT) that catalyzes the initial and rate-limiting step in sphingolipid biosynthesis by condensing L-serine and activated acyl-CoA (most commonly palmitoyl-CoA) to form long-chain bases. The SPT complex is composed of SPTLC1, SPTLC2 or SPTLC3 and SPTSSA or SPTSSB. Within this complex, the heterodimer consisting of SPTLC1 and SPTLC2/SPTLC3 forms the catalytic core. Within the SPT complex, SPTSSB stimulates the catalytic activity and plays a role in substrate specificity. SPT complexes with this subunit showing a preference for longer acyl-CoAs. The SPTLC1-SPTLC2-SPTSSB complex shows a strong preference for C18-CoA substrate, while the SPTLC1-SPTLC3-SPTSSB isozyme displays an ability to use a broader range of acyl-CoAs, without apparent preference. The polypeptide is Serine palmitoyltransferase small subunit B (sptssb) (Xenopus laevis (African clawed frog)).